A 281-amino-acid chain; its full sequence is Urease accessory protein UreD 2 (281 aa).

The protein belongs to the UreD family. As to quaternary structure, ureD, UreF and UreG form a complex that acts as a GTP-hydrolysis-dependent molecular chaperone, activating the urease apoprotein by helping to assemble the nickel containing metallocenter of UreC. The UreE protein probably delivers the nickel.

The protein localises to the cytoplasm. Its function is as follows. Required for maturation of urease via the functional incorporation of the urease nickel metallocenter. The protein is Urease accessory protein UreD 2 of Pseudomonas syringae pv. tomato (strain ATCC BAA-871 / DC3000).